The primary structure comprises 510 residues: Bifunctional purine biosynthesis protein PurH (510 aa).

The 142-residue stretch at methionine 1–threonine 142 folds into the MGS-like domain.

This sequence belongs to the PurH family.

The catalysed reaction is (6R)-10-formyltetrahydrofolate + 5-amino-1-(5-phospho-beta-D-ribosyl)imidazole-4-carboxamide = 5-formamido-1-(5-phospho-D-ribosyl)imidazole-4-carboxamide + (6S)-5,6,7,8-tetrahydrofolate. The enzyme catalyses IMP + H2O = 5-formamido-1-(5-phospho-D-ribosyl)imidazole-4-carboxamide. The protein operates within purine metabolism; IMP biosynthesis via de novo pathway; 5-formamido-1-(5-phospho-D-ribosyl)imidazole-4-carboxamide from 5-amino-1-(5-phospho-D-ribosyl)imidazole-4-carboxamide (10-formyl THF route): step 1/1. It functions in the pathway purine metabolism; IMP biosynthesis via de novo pathway; IMP from 5-formamido-1-(5-phospho-D-ribosyl)imidazole-4-carboxamide: step 1/1. This is Bifunctional purine biosynthesis protein PurH from Campylobacter curvus (strain 525.92).